The following is a 205-amino-acid chain: Large ribosomal subunit protein uL3 (205 aa).

Belongs to the universal ribosomal protein uL3 family. In terms of assembly, part of the 50S ribosomal subunit. Forms a cluster with proteins L14 and L19.

Its function is as follows. One of the primary rRNA binding proteins, it binds directly near the 3'-end of the 23S rRNA, where it nucleates assembly of the 50S subunit. The protein is Large ribosomal subunit protein uL3 of Thermosipho africanus (strain TCF52B).